Here is a 697-residue protein sequence, read N- to C-terminus: tRNA 5-methylaminomethyl-2-thiouridine biosynthesis bifunctional protein MnmC (697 aa).

A tRNA (mnm(5)s(2)U34)-methyltransferase region spans residues 1 to 272 (MPKPASMAMN…KREMLTAVMS (272 aa)). Positions 300-697 (IGAGVAGLLT…HKHKTRQAVI (398 aa)) are FAD-dependent cmnm(5)s(2)U34 oxidoreductase.

This sequence in the N-terminal section; belongs to the methyltransferase superfamily. tRNA (mnm(5)s(2)U34)-methyltransferase family. It in the C-terminal section; belongs to the DAO family. The cofactor is FAD.

Its subcellular location is the cytoplasm. It carries out the reaction 5-aminomethyl-2-thiouridine(34) in tRNA + S-adenosyl-L-methionine = 5-methylaminomethyl-2-thiouridine(34) in tRNA + S-adenosyl-L-homocysteine + H(+). Catalyzes the last two steps in the biosynthesis of 5-methylaminomethyl-2-thiouridine (mnm(5)s(2)U) at the wobble position (U34) in tRNA. Catalyzes the FAD-dependent demodification of cmnm(5)s(2)U34 to nm(5)s(2)U34, followed by the transfer of a methyl group from S-adenosyl-L-methionine to nm(5)s(2)U34, to form mnm(5)s(2)U34. This chain is tRNA 5-methylaminomethyl-2-thiouridine biosynthesis bifunctional protein MnmC, found in Psychrobacter cryohalolentis (strain ATCC BAA-1226 / DSM 17306 / VKM B-2378 / K5).